A 256-amino-acid polypeptide reads, in one-letter code: Reaction center protein M chain (256 aa).

The next 3 membrane-spanning stretches (helical) occupy residues 52-78 (PGVA…LASV), 110-139 (EGGW…ARAL), and 142-167 (GTHM…PLLL). The (7R,8Z)-bacteriochlorophyll b site is built by histidine 181 and histidine 201. Residues 197–225 (YNPFHMLSIAFLYGSAVLFAMHGATILAV) traverse the membrane as a helical segment. 2 residues coordinate Fe cation: histidine 218 and glutamate 233. A ubiquinone is bound at residue tryptophan 251.

It belongs to the reaction center PufL/M/PsbA/D family. As to quaternary structure, reaction center is composed of four bacteriochlorophylls, two bacteriopheophytins, two ubiquinones, one iron, and two highly hydrophobic polypeptide chains (designated L and M).

The protein resides in the cellular chromatophore membrane. In terms of biological role, the reaction center is a membrane-bound complex that mediates the initial photochemical event in the electron transfer process of photosynthesis. This Pararhodospirillum photometricum (Rhodospirillum photometricum) protein is Reaction center protein M chain (pufM).